Reading from the N-terminus, the 497-residue chain is Probable malate:quinone oxidoreductase (497 aa).

This sequence belongs to the MQO family. It depends on FAD as a cofactor.

It catalyses the reaction (S)-malate + a quinone = a quinol + oxaloacetate. It functions in the pathway carbohydrate metabolism; tricarboxylic acid cycle; oxaloacetate from (S)-malate (quinone route): step 1/1. This chain is Probable malate:quinone oxidoreductase, found in Rhodopseudomonas palustris (strain ATCC BAA-98 / CGA009).